The chain runs to 640 residues: Protein SPT10 (640 aa).

The segment at 1 to 30 (MLNQHTSSVPDDEHLQMAHQNSSSEVRNEA) is disordered. One can recognise an N-acetyltransferase domain in the interval 121 to 259 (LDYSMDTEAD…AGILKGFDVP (139 aa)). Residues 534–565 (PHLTNNESQDHANPVNRDERDMNHSVPDLDRN) are disordered. Over residues 549-565 (NRDERDMNHSVPDLDRN) the composition is skewed to basic and acidic residues.

In terms of biological role, required for normal transcription at a number of loci in yeast. Affects transcription at Ty1 elements, at PHO5, STE6 and ADH2. The polypeptide is Protein SPT10 (SPT10) (Saccharomyces cerevisiae (strain ATCC 204508 / S288c) (Baker's yeast)).